Here is a 724-residue protein sequence, read N- to C-terminus: Ribosomal protein S6 kinase alpha-1 (724 aa).

A Phosphoserine modification is found at Ser-54. One can recognise a Protein kinase 1 domain in the interval 62–310; it reads FELLKVLGQG…AEEIKRHIFY (249 aa). Residues 68–76 and Lys-94 contribute to the ATP site; that span reads LGQGSFGKV. The active-site Proton acceptor is the Asp-187. Ser-221 is modified (phosphoserine; by PDPK1). Ser-296 bears the Phosphoserine mark. The AGC-kinase C-terminal domain occupies 311–380; the sequence is STIDWNKLYR…VATGLMEDDG (70 aa). A Phosphothreonine modification is found at Thr-348. Residues Ser-352, Ser-358, and Ser-369 each carry the phosphoserine modification. A Protein kinase 2 domain is found at 407-664; sequence YVVKETIGVG…AKQVLQHPWI (258 aa). ATP-binding positions include 413-421 and Lys-436; that span reads IGVGSYSVC. Asp-524 functions as the Proton acceptor in the catalytic mechanism. Residue Thr-562 is modified to Phosphothreonine. Ser-721 is modified (phosphoserine).

Belongs to the protein kinase superfamily. AGC Ser/Thr protein kinase family. S6 kinase subfamily. Forms a complex with either MAPK1/ERK2 or MAPK3/ERK1 in quiescent cells. Transiently dissociates following mitogenic stimulation. Interacts with ETV1/ER81 and FGFR1. It depends on Mg(2+) as a cofactor. In terms of processing, activated by phosphorylation at Ser-221 by PDPK1. Autophosphorylated on Ser-369, as part of the activation process. May be phosphorylated at Thr-348 and Ser-352 by MAPK1/ERK2 and MAPK3/ERK1. Post-translationally, N-terminal myristoylation results in an activated kinase in the absence of added growth factors. Intestine, thymus, and lung.

It is found in the nucleus. The protein resides in the cytoplasm. It catalyses the reaction L-seryl-[protein] + ATP = O-phospho-L-seryl-[protein] + ADP + H(+). It carries out the reaction L-threonyl-[protein] + ATP = O-phospho-L-threonyl-[protein] + ADP + H(+). Upon extracellular signal or mitogen stimulation, phosphorylated at Thr-562 in the C-terminal kinase domain (CTKD) by MAPK1/ERK2 and MAPK3/ERK1. The activated CTKD then autophosphorylates Ser-369, allowing binding of PDPK1, which in turn phosphorylates Ser-221 in the N-terminal kinase domain (NTDK) leading to the full activation of the protein and subsequent phosphorylation of the substrates by the NTKD. In terms of biological role, serine/threonine-protein kinase that acts downstream of ERK (MAPK1/ERK2 and MAPK3/ERK1) signaling and mediates mitogenic and stress-induced activation of the transcription factors CREB1, ETV1/ER81 and NR4A1/NUR77, regulates translation through RPS6 and EIF4B phosphorylation, and mediates cellular proliferation, survival, and differentiation by modulating mTOR signaling and repressing pro-apoptotic function of BAD and DAPK1. In fibroblast, is required for EGF-stimulated phosphorylation of CREB1, which results in the subsequent transcriptional activation of several immediate-early genes. In response to mitogenic stimulation (EGF and PMA), phosphorylates and activates NR4A1/NUR77 and ETV1/ER81 transcription factors and the cofactor CREBBP. Upon insulin-derived signal, acts indirectly on the transcription regulation of several genes by phosphorylating GSK3B at 'Ser-9' and inhibiting its activity. Phosphorylates RPS6 in response to serum or EGF via an mTOR-independent mechanism and promotes translation initiation by facilitating assembly of the pre-initiation complex. In response to insulin, phosphorylates EIF4B, enhancing EIF4B affinity for the EIF3 complex and stimulating cap-dependent translation. Is involved in the mTOR nutrient-sensing pathway by directly phosphorylating TSC2 at 'Ser-1798', which potently inhibits TSC2 ability to suppress mTOR signaling, and mediates phosphorylation of RPTOR, which regulates mTORC1 activity and may promote rapamycin-sensitive signaling independently of the PI3K/AKT pathway. Also involved in feedback regulation of mTORC1 and mTORC2 by phosphorylating DEPTOR. Mediates cell survival by phosphorylating the pro-apoptotic proteins BAD and DAPK1 and suppressing their pro-apoptotic function. Promotes the survival of hepatic stellate cells by phosphorylating CEBPB in response to the hepatotoxin carbon tetrachloride (CCl4). Mediates induction of hepatocyte prolifration by TGFA through phosphorylation of CEBPB. Is involved in cell cycle regulation by phosphorylating the CDK inhibitor CDKN1B, which promotes CDKN1B association with 14-3-3 proteins and prevents its translocation to the nucleus and inhibition of G1 progression. Phosphorylates EPHA2 at 'Ser-897', the RPS6KA-EPHA2 signaling pathway controls cell migration. In response to mTORC1 activation, phosphorylates EIF4B at 'Ser-406' and 'Ser-422' which stimulates bicarbonate cotransporter SLC4A7 mRNA translation, increasing SLC4A7 protein abundance and function. The polypeptide is Ribosomal protein S6 kinase alpha-1 (Rps6ka1) (Mus musculus (Mouse)).